The sequence spans 338 residues: Solute carrier family 35 member G3 (338 aa).

The interval 1–24 (MAGSHPYFNQPDSTHPSPPSAPPS) is disordered. Helical transmembrane passes span 37–57 (TSGL…VGPL), 67–87 (LPSL…ALLL), 105–125 (FFCA…VQVV), 160–180 (CGLL…LWTL), 190–210 (ALGY…LLVY), 221–241 (TVAF…LFVL), 250–270 (LLSW…FTCV), 281–301 (LVCA…YYML), and 305–325 (VAPS…IITA). In terms of domain architecture, EamA 1 spans 49 to 174 (LPAGFVGPLS…CILGLIIIVG (126 aa)). Positions 272–325 (YAVTKAHPALVCAVLHSEVVVALILQYYMLHETVAPSDIMGAGVALGSIAIITA) constitute an EamA 2 domain.

It belongs to the SLC35G solute transporter family.

It localises to the membrane. The polypeptide is Solute carrier family 35 member G3 (SLC35G3) (Pan paniscus (Pygmy chimpanzee)).